Consider the following 305-residue polypeptide: GMP synthase [glutamine-hydrolyzing] subunit B (305 aa).

Positions 2–185 (VNVDEFIEEA…LDLEEIISER (184 aa)) constitute a GMPS ATP-PPase domain. Residue 29 to 35 (SGGVDSS) participates in ATP binding.

In terms of assembly, heterodimer composed of a glutamine amidotransferase subunit (A) and a GMP-binding subunit (B).

It carries out the reaction XMP + L-glutamine + ATP + H2O = GMP + L-glutamate + AMP + diphosphate + 2 H(+). It participates in purine metabolism; GMP biosynthesis; GMP from XMP (L-Gln route): step 1/1. Catalyzes the synthesis of GMP from XMP. This is GMP synthase [glutamine-hydrolyzing] subunit B from Haloarcula marismortui (strain ATCC 43049 / DSM 3752 / JCM 8966 / VKM B-1809) (Halobacterium marismortui).